The primary structure comprises 231 residues: 2-hydroxy-3-keto-5-methylthiopentenyl-1-phosphate phosphatase (231 aa).

The protein belongs to the HAD-like hydrolase superfamily. MtnX family.

It carries out the reaction 2-hydroxy-5-methylsulfanyl-3-oxopent-1-enyl phosphate + H2O = 1,2-dihydroxy-5-(methylsulfanyl)pent-1-en-3-one + phosphate. Its pathway is amino-acid biosynthesis; L-methionine biosynthesis via salvage pathway; L-methionine from S-methyl-5-thio-alpha-D-ribose 1-phosphate: step 4/6. Its function is as follows. Dephosphorylates 2-hydroxy-3-keto-5-methylthiopentenyl-1-phosphate (HK-MTPenyl-1-P) yielding 1,2-dihydroxy-3-keto-5-methylthiopentene (DHK-MTPene). The protein is 2-hydroxy-3-keto-5-methylthiopentenyl-1-phosphate phosphatase of Bacillus pumilus (strain SAFR-032).